The primary structure comprises 202 residues: Ribosome maturation factor RimP (202 aa).

Belongs to the RimP family.

It localises to the cytoplasm. Its function is as follows. Required for maturation of 30S ribosomal subunits. This chain is Ribosome maturation factor RimP, found in Paracidovorax citrulli (strain AAC00-1) (Acidovorax citrulli).